Consider the following 273-residue polypeptide: Nitrogenase iron protein (273 aa).

8-15 (GKGGIGKS) is an ATP binding site. [4Fe-4S] cluster is bound at residue Cys95. ADP-ribosylarginine; by dinitrogenase reductase ADP-ribosyltransferase is present on Arg98. Cys130 contacts [4Fe-4S] cluster.

The protein belongs to the NifH/BchL/ChlL family. As to quaternary structure, homodimer. It depends on [4Fe-4S] cluster as a cofactor. In terms of processing, the reversible ADP-ribosylation of Arg-98 inactivates the nitrogenase reductase and regulates nitrogenase activity.

The enzyme catalyses N2 + 8 reduced [2Fe-2S]-[ferredoxin] + 16 ATP + 16 H2O = H2 + 8 oxidized [2Fe-2S]-[ferredoxin] + 2 NH4(+) + 16 ADP + 16 phosphate + 6 H(+). Functionally, the key enzymatic reactions in nitrogen fixation are catalyzed by the nitrogenase complex, which has 2 components: the iron protein and the molybdenum-iron protein. The sequence is that of Nitrogenase iron protein from Roseiflexus castenholzii (strain DSM 13941 / HLO8).